Here is a 169-residue protein sequence, read N- to C-terminus: MSVLQVLHYPDDRLRKVAAPVKEVNANIQRIVDDMFETMYAEEGIGLAATQVDIHQRIIVIDVSENRDQRLVLINPELLEKSGETGIEEGCLSIPEQRALVPRAAAVKIRALDRDGKPFELEADDLLAICIQHEMDHLVGKLFVDYLSPLKRQRIRQKLEKMAKLNARA.

Residues C91 and H133 each coordinate Fe cation. E134 is an active-site residue. H137 lines the Fe cation pocket.

Belongs to the polypeptide deformylase family. The cofactor is Fe(2+).

It catalyses the reaction N-terminal N-formyl-L-methionyl-[peptide] + H2O = N-terminal L-methionyl-[peptide] + formate. In terms of biological role, removes the formyl group from the N-terminal Met of newly synthesized proteins. Requires at least a dipeptide for an efficient rate of reaction. N-terminal L-methionine is a prerequisite for activity but the enzyme has broad specificity at other positions. The polypeptide is Peptide deformylase (Serratia proteamaculans (strain 568)).